The chain runs to 495 residues: Glycerol kinase (495 aa).

Thr11 serves as a coordination point for ADP. ATP is bound by residues Thr11, Thr12, and Ser13. Thr11 contributes to the sn-glycerol 3-phosphate binding site. Position 15 (Arg15) interacts with ADP. Residues Arg81, Glu82, Tyr133, and Asp242 each coordinate sn-glycerol 3-phosphate. Residues Arg81, Glu82, Tyr133, Asp242, and Gln243 each coordinate glycerol. ADP is bound by residues Thr264 and Gly307. Residues Thr264, Gly307, Gln311, and Gly408 each contribute to the ATP site. ADP contacts are provided by Gly408 and Asn412.

The protein belongs to the FGGY kinase family.

It carries out the reaction glycerol + ATP = sn-glycerol 3-phosphate + ADP + H(+). It functions in the pathway polyol metabolism; glycerol degradation via glycerol kinase pathway; sn-glycerol 3-phosphate from glycerol: step 1/1. With respect to regulation, inhibited by fructose 1,6-bisphosphate (FBP). Its function is as follows. Key enzyme in the regulation of glycerol uptake and metabolism. Catalyzes the phosphorylation of glycerol to yield sn-glycerol 3-phosphate. This chain is Glycerol kinase, found in Acinetobacter baylyi (strain ATCC 33305 / BD413 / ADP1).